An 83-amino-acid chain; its full sequence is RNA-binding protein Hfq (83 aa).

In terms of domain architecture, Sm spans 11–71 (DVFLNYIRKN…ISTIMPASPV (61 aa)).

It belongs to the Hfq family. Homohexamer.

Functionally, RNA chaperone that binds small regulatory RNA (sRNAs) and mRNAs to facilitate mRNA translational regulation in response to envelope stress, environmental stress and changes in metabolite concentrations. Also binds with high specificity to tRNAs. In Rhodospirillum rubrum (strain ATCC 11170 / ATH 1.1.1 / DSM 467 / LMG 4362 / NCIMB 8255 / S1), this protein is RNA-binding protein Hfq.